The following is a 505-amino-acid chain: ATP synthase subunit beta (505 aa).

157 to 164 (GGAGVGKT) serves as a coordination point for ATP.

The protein belongs to the ATPase alpha/beta chains family. F-type ATPases have 2 components, CF(1) - the catalytic core - and CF(0) - the membrane proton channel. CF(1) has five subunits: alpha(3), beta(3), gamma(1), delta(1), epsilon(1). CF(0) has three main subunits: a(1), b(2) and c(9-12). The alpha and beta chains form an alternating ring which encloses part of the gamma chain. CF(1) is attached to CF(0) by a central stalk formed by the gamma and epsilon chains, while a peripheral stalk is formed by the delta and b chains.

It is found in the cell inner membrane. It carries out the reaction ATP + H2O + 4 H(+)(in) = ADP + phosphate + 5 H(+)(out). Functionally, produces ATP from ADP in the presence of a proton gradient across the membrane. The catalytic sites are hosted primarily by the beta subunits. In Bacteroides fragilis (strain ATCC 25285 / DSM 2151 / CCUG 4856 / JCM 11019 / LMG 10263 / NCTC 9343 / Onslow / VPI 2553 / EN-2), this protein is ATP synthase subunit beta.